The primary structure comprises 512 residues: ATP synthase subunit alpha (512 aa).

169-176 (GDRKTGKT) lines the ATP pocket.

The protein belongs to the ATPase alpha/beta chains family. F-type ATPases have 2 components, CF(1) - the catalytic core - and CF(0) - the membrane proton channel. CF(1) has five subunits: alpha(3), beta(3), gamma(1), delta(1), epsilon(1). CF(0) has three main subunits: a(1), b(2) and c(9-12). The alpha and beta chains form an alternating ring which encloses part of the gamma chain. CF(1) is attached to CF(0) by a central stalk formed by the gamma and epsilon chains, while a peripheral stalk is formed by the delta and b chains.

The protein localises to the cell membrane. It catalyses the reaction ATP + H2O + 4 H(+)(in) = ADP + phosphate + 5 H(+)(out). Produces ATP from ADP in the presence of a proton gradient across the membrane. The alpha chain is a regulatory subunit. The polypeptide is ATP synthase subunit alpha (Limosilactobacillus fermentum (strain NBRC 3956 / LMG 18251) (Lactobacillus fermentum)).